A 459-amino-acid chain; its full sequence is Cysteine--tRNA ligase (459 aa).

Zn(2+) is bound at residue Cys31. A 'HIGH' region motif is present at residues 33 to 43 (PTVYYNPHIGN). Zn(2+) is bound by residues Cys216, His241, and Glu245. Residues 274-278 (KMSKS) carry the 'KMSKS' region motif. Lys277 serves as a coordination point for ATP.

The protein belongs to the class-I aminoacyl-tRNA synthetase family. As to quaternary structure, monomer. Zn(2+) is required as a cofactor.

The protein localises to the cytoplasm. It carries out the reaction tRNA(Cys) + L-cysteine + ATP = L-cysteinyl-tRNA(Cys) + AMP + diphosphate. The protein is Cysteine--tRNA ligase of Rickettsia rickettsii (strain Iowa).